Consider the following 515-residue polypeptide: Zinc-binding protein AdcA (515 aa).

The first 28 residues, 1–28 (MKKKILLMMSLISVFFAWQLTQAKQVLA), serve as a signal peptide directing secretion. Zn(2+) is bound at residue His-66. Positions 125-148 (DHHHEDADKKHEHNKHSEEGHNHA) are disordered. Residues 129-148 (EDADKKHEHNKHSEEGHNHA) form a his-rich loop region. Zn(2+) is bound by residues His-152, His-216, and Glu-291.

This sequence belongs to the bacterial solute-binding protein 9 family.

Functionally, part of the ATP-binding cassette (ABC) transport system AdcABC involved in zinc import. Binds zinc with high affinity and specificity and delivers it to the membrane permease for translocation into the cytoplasm. The sequence is that of Zinc-binding protein AdcA (adcA) from Streptococcus pyogenes serotype M1.